Consider the following 642-residue polypeptide: tRNA uridine 5-carboxymethylaminomethyl modification enzyme MnmG (642 aa).

FAD-binding positions include 10-15 (GAGHAG), valine 122, and serine 177. 269–283 (SARYCPSLEDKVMRF) is an NAD(+) binding site. Residue glutamine 366 participates in FAD binding.

This sequence belongs to the MnmG family. As to quaternary structure, homodimer. Heterotetramer of two MnmE and two MnmG subunits. The cofactor is FAD.

It localises to the cytoplasm. Its function is as follows. NAD-binding protein involved in the addition of a carboxymethylaminomethyl (cmnm) group at the wobble position (U34) of certain tRNAs, forming tRNA-cmnm(5)s(2)U34. The protein is tRNA uridine 5-carboxymethylaminomethyl modification enzyme MnmG of Syntrophobacter fumaroxidans (strain DSM 10017 / MPOB).